The sequence spans 619 residues: Polyadenylate-binding protein 1-like (619 aa).

RRM domains follow at residues 11 to 89 (ASLY…WSQR), 99 to 175 (GNIF…HFKS), 191 to 268 (TNIY…RAQK), and 294 to 370 (VNLY…LAQR). The disordered stretch occupies residues 431–458 (PAPRWTSQPPRPSSAYPPGASMVRPPVV). The PABC domain maps to 533–610 (QEPLTASMLA…AVAVLQAHQA (78 aa)).

It belongs to the polyadenylate-binding protein type-1 family. Expressed in ovary and testis. Also expressed in pancreas, liver and thymus, and at lower levels in other somatic tissues including brain and lung.

Its subcellular location is the cytoplasm. Its function is as follows. Poly(A)-binding protein involved in oocyte maturation and early embryo development. It is required for cytosolic mRNA polyadenylation and translational activation of maternally stored mRNA in oocytes. This chain is Polyadenylate-binding protein 1-like, found in Homo sapiens (Human).